A 568-amino-acid polypeptide reads, in one-letter code: Small ribosomal subunit protein bS1 (568 aa).

S1 motif domains lie at 27 to 93 (GYVA…LSRE), 111 to 177 (GERV…VSRR), 198 to 266 (GQVV…LGMK), 283 to 353 (GKKI…LGLK), 370 to 440 (GTEV…LGIK), and 459 to 530 (NAVV…LSIK).

Belongs to the bacterial ribosomal protein bS1 family.

In terms of biological role, binds mRNA; thus facilitating recognition of the initiation point. It is needed to translate mRNA with a short Shine-Dalgarno (SD) purine-rich sequence. The chain is Small ribosomal subunit protein bS1 (rpsA) from Rhizobium meliloti (strain 1021) (Ensifer meliloti).